A 530-amino-acid chain; its full sequence is Probable serine/threonine-protein kinase fnkB (530 aa).

One can recognise a Protein kinase domain in the interval tryptophan 11–leucine 268. ATP is bound by residues leucine 17–asparagine 25 and lysine 43. Residue aspartate 131 is the Proton acceptor of the active site.

This sequence belongs to the protein kinase superfamily. STE Ser/Thr protein kinase family. Requires Mg(2+) as cofactor.

The enzyme catalyses L-seryl-[protein] + ATP = O-phospho-L-seryl-[protein] + ADP + H(+). It carries out the reaction L-threonyl-[protein] + ATP = O-phospho-L-threonyl-[protein] + ADP + H(+). The polypeptide is Probable serine/threonine-protein kinase fnkB (Dictyostelium discoideum (Social amoeba)).